We begin with the raw amino-acid sequence, 86 residues long: MAHKKAGGSSRNGRDSAGQRRGVKKFGGEPVRSGNILIRQLGTKVHPGTNVGCGRDYTLFAKIDGVVKFEDFGKNKKRVSVYPAAE.

The tract at residues 1 to 31 (MAHKKAGGSSRNGRDSAGQRRGVKKFGGEPV) is disordered.

Belongs to the bacterial ribosomal protein bL27 family.

This Desulfotalea psychrophila (strain LSv54 / DSM 12343) protein is Large ribosomal subunit protein bL27.